Reading from the N-terminus, the 93-residue chain is Small ribosomal subunit protein uS19 (93 aa).

It belongs to the universal ribosomal protein uS19 family.

Protein S19 forms a complex with S13 that binds strongly to the 16S ribosomal RNA. The chain is Small ribosomal subunit protein uS19 from Syntrophus aciditrophicus (strain SB).